The chain runs to 398 residues: Cytochrome b (398 aa).

Residues 45-65 (LGSIAGIALVIQIITGVILAM) form a helical membrane-spanning segment. Positions 95 and 109 each coordinate heme b. A run of 9 helical transmembrane segments spans residues 96-116 (AVGA…GLYY), 129-149 (IGII…VLPW), 164-184 (FSAI…GFSV), 192-212 (FFAL…LHLV), 245-265 (FVGF…APNY), 277-297 (PLVT…YAIL), 304-324 (LGGV…PWLD), 339-359 (IAFW…SKPV), and 366-386 (ISRF…PLIG). Residues His-196 and His-210 each contribute to the heme b site.

This sequence belongs to the cytochrome b family. In terms of assembly, the main subunits of complex b-c1 are: cytochrome b, cytochrome c1 and the Rieske protein. Requires heme b as cofactor.

The protein resides in the cell membrane. In terms of biological role, component of the ubiquinol-cytochrome c reductase complex (complex III or cytochrome b-c1 complex), which is a respiratory chain that generates an electrochemical potential coupled to ATP synthesis. The chain is Cytochrome b (petB) from Rickettsia prowazekii (strain Madrid E).